We begin with the raw amino-acid sequence, 740 residues long: Catalase-peroxidase (740 aa).

Residues 1-32 are disordered; the sequence is MPEDRPIEDSPPIGEAQTDAPAGGCPAGFGRI. Residues 113 to 237 constitute a cross-link (tryptophyl-tyrosyl-methioninium (Trp-Tyr) (with M-263)); that stretch reads WHAAGTYRVS…LAAVQMGLIY (125 aa). His-114 functions as the Proton acceptor in the catalytic mechanism. Residues 237 to 263 constitute a cross-link (tryptophyl-tyrosyl-methioninium (Tyr-Met) (with W-113)); sequence YVNPEGPNGNPDPQASAIDIRETFGRM. His-278 serves as a coordination point for heme b.

This sequence belongs to the peroxidase family. Peroxidase/catalase subfamily. In terms of assembly, homodimer or homotetramer. Heme b is required as a cofactor. Formation of the three residue Trp-Tyr-Met cross-link is important for the catalase, but not the peroxidase activity of the enzyme.

The enzyme catalyses H2O2 + AH2 = A + 2 H2O. It carries out the reaction 2 H2O2 = O2 + 2 H2O. In terms of biological role, bifunctional enzyme with both catalase and broad-spectrum peroxidase activity. May play a role in the intracellular survival of mycobacteria. This Mycolicibacterium smegmatis (Mycobacterium smegmatis) protein is Catalase-peroxidase.